The primary structure comprises 369 residues: Probable dual-specificity RNA methyltransferase RlmN (369 aa).

E108 acts as the Proton acceptor in catalysis. Residues 114–357 (YPDRATVCIS…CTVRDTRGQE (244 aa)) enclose the Radical SAM core domain. The cysteines at positions 121 and 362 are disulfide-linked. 3 residues coordinate [4Fe-4S] cluster: C128, C132, and C135. Residues 183 to 184 (GE), S217, 240 to 242 (SLH), and N319 each bind S-adenosyl-L-methionine. C362 acts as the S-methylcysteine intermediate in catalysis.

The protein belongs to the radical SAM superfamily. RlmN family. [4Fe-4S] cluster is required as a cofactor.

It is found in the cytoplasm. It carries out the reaction adenosine(2503) in 23S rRNA + 2 reduced [2Fe-2S]-[ferredoxin] + 2 S-adenosyl-L-methionine = 2-methyladenosine(2503) in 23S rRNA + 5'-deoxyadenosine + L-methionine + 2 oxidized [2Fe-2S]-[ferredoxin] + S-adenosyl-L-homocysteine. The catalysed reaction is adenosine(37) in tRNA + 2 reduced [2Fe-2S]-[ferredoxin] + 2 S-adenosyl-L-methionine = 2-methyladenosine(37) in tRNA + 5'-deoxyadenosine + L-methionine + 2 oxidized [2Fe-2S]-[ferredoxin] + S-adenosyl-L-homocysteine. Specifically methylates position 2 of adenine 2503 in 23S rRNA and position 2 of adenine 37 in tRNAs. This is Probable dual-specificity RNA methyltransferase RlmN from Saccharopolyspora erythraea (strain ATCC 11635 / DSM 40517 / JCM 4748 / NBRC 13426 / NCIMB 8594 / NRRL 2338).